Reading from the N-terminus, the 308-residue chain is ATP synthase gamma chain (308 aa).

The protein belongs to the ATPase gamma chain family. As to quaternary structure, F-type ATPases have 2 components, CF(1) - the catalytic core - and CF(0) - the membrane proton channel. CF(1) has five subunits: alpha(3), beta(3), gamma(1), delta(1), epsilon(1). CF(0) has three main subunits: a, b and c.

The protein resides in the cell membrane. Functionally, produces ATP from ADP in the presence of a proton gradient across the membrane. The gamma chain is believed to be important in regulating ATPase activity and the flow of protons through the CF(0) complex. This Mycobacteroides abscessus (strain ATCC 19977 / DSM 44196 / CCUG 20993 / CIP 104536 / JCM 13569 / NCTC 13031 / TMC 1543 / L948) (Mycobacterium abscessus) protein is ATP synthase gamma chain.